Here is a 1404-residue protein sequence, read N- to C-terminus: G8 domain-containing protein DDB_G0286897 (1404 aa).

An N-terminal signal peptide occupies residues 1-20 (MNYFKYFIFVVFLFFTIVKC). Transmembrane regions (helical) follow at residues 97 to 117 (LVGF…GLFA) and 128 to 148 (IIIL…IQSI). N-linked (GlcNAc...) asparagine glycosylation is found at N352, N365, N413, N481, N639, N838, N979, N1003, N1017, N1253, and N1334. The G8 domain occupies 553–679 (STWASGFVPL…YHNTWTKLST (127 aa)).

Belongs to the comF family.

It is found in the membrane. This is G8 domain-containing protein DDB_G0286897 from Dictyostelium discoideum (Social amoeba).